Reading from the N-terminus, the 277-residue chain is MASRGVVGLFLLSALPLLCLELRRGIPSLGIKDLILLSGRIFLLLALLTLVISVTTSWFNSLKPSQGHLKEGEKENEKRRRLVRERQQEAQGEKASRYIENVLKPQQEMKLKKLEERFYQMTGETWKLTAGHRLLEGDEDSEFENSSQASFETINGEAARRQNLPKFSTEISPAARPLLRKEVPDLPEEPSETAEEVVTVALRCPNGRVLRRRFFKSWNSQVLLDWMMKVGYHKSLYRLSTSFPRRALEVEGGSSLEDIGITVDTVLNVEEKEQSSQ.

Met1 is a topological domain (cytoplasmic). A helical membrane pass occupies residues 2–22 (ASRGVVGLFLLSALPLLCLEL). At 23–33 (RRGIPSLGIKD) the chain is on the lumenal side. Residues 34–54 (LILLSGRIFLLLALLTLVISV) form a helical membrane-spanning segment. The Cytoplasmic portion of the chain corresponds to 55–277 (TTSWFNSLKP…NVEEKEQSSQ (223 aa)). The interval 64–89 (PSQGHLKEGEKENEKRRRLVRERQQE) is disordered. Basic and acidic residues predominate over residues 68 to 89 (HLKEGEKENEKRRRLVRERQQE). Residues 193–269 (TAEEVVTVAL…GITVDTVLNV (77 aa)) form the UBX domain.

In terms of assembly, interacts with SYVN1 and VCP. As to expression, highly expressed in gonads. In testis, expressed in post-meiotic round spermatids, while in ovaries it is expressed in granulosa cells.

The protein resides in the endoplasmic reticulum membrane. Its function is as follows. Involved in endoplasmic reticulum-associated degradation (ERAD) for misfolded lumenal proteins, possibly by tethering VCP to the endoplasmic reticulum membrane. May play a role in reproduction. The protein is UBX domain-containing protein 8 (Ubxn8) of Mus musculus (Mouse).